Reading from the N-terminus, the 213-residue chain is Thiamine-phosphate synthase (213 aa).

4-amino-2-methyl-5-(diphosphooxymethyl)pyrimidine-binding positions include 39–43 (QYRDK) and D71. Mg(2+) is bound by residues D72 and D91. S108 contacts 4-amino-2-methyl-5-(diphosphooxymethyl)pyrimidine. 135–137 (TDT) contributes to the 2-[(2R,5Z)-2-carboxy-4-methylthiazol-5(2H)-ylidene]ethyl phosphate binding site. K138 provides a ligand contact to 4-amino-2-methyl-5-(diphosphooxymethyl)pyrimidine. Residues G165 and 185–186 (VS) each bind 2-[(2R,5Z)-2-carboxy-4-methylthiazol-5(2H)-ylidene]ethyl phosphate.

Belongs to the thiamine-phosphate synthase family. The cofactor is Mg(2+).

It catalyses the reaction 2-[(2R,5Z)-2-carboxy-4-methylthiazol-5(2H)-ylidene]ethyl phosphate + 4-amino-2-methyl-5-(diphosphooxymethyl)pyrimidine + 2 H(+) = thiamine phosphate + CO2 + diphosphate. The enzyme catalyses 2-(2-carboxy-4-methylthiazol-5-yl)ethyl phosphate + 4-amino-2-methyl-5-(diphosphooxymethyl)pyrimidine + 2 H(+) = thiamine phosphate + CO2 + diphosphate. The catalysed reaction is 4-methyl-5-(2-phosphooxyethyl)-thiazole + 4-amino-2-methyl-5-(diphosphooxymethyl)pyrimidine + H(+) = thiamine phosphate + diphosphate. It functions in the pathway cofactor biosynthesis; thiamine diphosphate biosynthesis; thiamine phosphate from 4-amino-2-methyl-5-diphosphomethylpyrimidine and 4-methyl-5-(2-phosphoethyl)-thiazole: step 1/1. In terms of biological role, condenses 4-methyl-5-(beta-hydroxyethyl)thiazole monophosphate (THZ-P) and 2-methyl-4-amino-5-hydroxymethyl pyrimidine pyrophosphate (HMP-PP) to form thiamine monophosphate (TMP). The chain is Thiamine-phosphate synthase from Thermoplasma acidophilum (strain ATCC 25905 / DSM 1728 / JCM 9062 / NBRC 15155 / AMRC-C165).